A 66-amino-acid chain; its full sequence is UPF0337 protein SpyM3_1723 (66 aa).

Basic and acidic residues predominate over residues 1–10; sequence MSEEKLKSKI. The interval 1-23 is disordered; that stretch reads MSEEKLKSKIEQASGGLKEGAGK.

Belongs to the UPF0337 (CsbD) family.

This chain is UPF0337 protein SpyM3_1723, found in Streptococcus pyogenes serotype M3 (strain ATCC BAA-595 / MGAS315).